The sequence spans 350 residues: Cytochrome c biogenesis protein CcsA (350 aa).

Transmembrane regions (helical) follow at residues 23 to 43, 47 to 67, 82 to 102, 108 to 128, 153 to 173, 258 to 278, 293 to 313, and 319 to 339; these read NVAF…AAFP, LLAE…AALL, LYES…LALH, WVGV…ALVL, VMLL…SFLI, LIGL…VWAN, WALI…TKGW, and ALLA…VNFL.

It belongs to the CcmF/CycK/Ccl1/NrfE/CcsA family. May interact with ccs1.

The protein localises to the cellular thylakoid membrane. Required during biogenesis of c-type cytochromes (cytochrome c6 and cytochrome f) at the step of heme attachment. In Synechococcus sp. (strain JA-2-3B'a(2-13)) (Cyanobacteria bacterium Yellowstone B-Prime), this protein is Cytochrome c biogenesis protein CcsA.